We begin with the raw amino-acid sequence, 332 residues long: tRNA U34 carboxymethyltransferase (332 aa).

Residues lysine 91, tryptophan 105, lysine 110, glycine 130, 152-154 (DPS), 181-182 (IE), methionine 196, tyrosine 200, and arginine 315 each bind carboxy-S-adenosyl-L-methionine.

This sequence belongs to the class I-like SAM-binding methyltransferase superfamily. CmoB family. As to quaternary structure, homotetramer.

It carries out the reaction carboxy-S-adenosyl-L-methionine + 5-hydroxyuridine(34) in tRNA = 5-carboxymethoxyuridine(34) in tRNA + S-adenosyl-L-homocysteine + H(+). Catalyzes carboxymethyl transfer from carboxy-S-adenosyl-L-methionine (Cx-SAM) to 5-hydroxyuridine (ho5U) to form 5-carboxymethoxyuridine (cmo5U) at position 34 in tRNAs. The chain is tRNA U34 carboxymethyltransferase from Shewanella putrefaciens (strain CN-32 / ATCC BAA-453).